The following is a 348-amino-acid chain: Autophagy-related protein 27 (348 aa).

Residues 1–20 (MYRPDLLAFLLPLLAAPVFS) form the signal peptide. The Lumenal portion of the chain corresponds to 21–274 (AETLDCGKIR…DDGGDNSSSH (254 aa)). The region spanning 24 to 255 (LDCGKIRADG…TWHTKYACEK (232 aa)) is the MRH domain. 3 disulfides stabilise this stretch: Cys-26–Cys-69, Cys-82–Cys-89, and Cys-175–Cys-253. 2 N-linked (GlcNAc...) asparagine glycosylation sites follow: Asn-61 and Asn-84. Residues 180-208 (EGTEGEWVSEEKYEKRADEKKDDDKKEDG) are compositionally biased toward basic and acidic residues. The interval 180-219 (EGTEGEWVSEEKYEKRADEKKDDDKKEDGGDKDEGESTLE) is disordered. Asn-226 and Asn-270 each carry an N-linked (GlcNAc...) asparagine glycan. The chain crosses the membrane as a helical span at residues 275–295 (WGFFTWFVLIAFLLIAGYLIF). Topologically, residues 296 to 348 (SSWINFTRYGARGWDLLPHSDTIRDIPYLLKDFIRRILNTVQGTGSRGGYSAV) are cytoplasmic.

Belongs to the ATG27 family. Forms a complex with ATG9 and ATG23.

It localises to the cytoplasmic vesicle membrane. It is found in the golgi apparatus membrane. The protein localises to the mitochondrion membrane. The protein resides in the preautophagosomal structure membrane. Its function is as follows. Effector of VPS34 phosphatidylinositol 3-phosphate kinase signaling. Regulates the cytoplasm to vacuole transport (Cvt) vesicle formation. Plays a role in ATG protein retrieval from the pre-autophagosomal structure (PAS) and is especially required for autophagy-dependent cycling of ATG9. Autophagy is required for proper vegetative growth, asexual/sexual reproduction, and full virulence. Autophagy is particularly involved in the biosynthesis of deoxynivalenol (DON), an important virulence determinant. This is Autophagy-related protein 27 from Gibberella zeae (strain ATCC MYA-4620 / CBS 123657 / FGSC 9075 / NRRL 31084 / PH-1) (Wheat head blight fungus).